The following is a 221-amino-acid chain: MSQGFERYERQYCEISANLSKKCTSAIALDGEQKKQNLSEIKSGVEEAEALVKKMDLEARNLPPNVKSSLLVKLREYKSDLNNFKTEVKRITSGNLNATARDELLEAGMADTLTASADQRSRLMMSTDHLGRTTDRIKDSRRTILETEELGVSILQDLHGQRQSLLRAHETLHGVDDNVGKSKKILTTMTRRMNRNKWTIGAIITVLVLAIIFILYFKLTR.

Residues 1 to 198 are Cytoplasmic-facing; it reads MSQGFERYER…MTRRMNRNKW (198 aa). The stretch at 32–93 forms a coiled coil; sequence EQKKQNLSEI…FKTEVKRITS (62 aa). The helical; Anchor for type IV membrane protein transmembrane segment at 199–219 threads the bilayer; sequence TIGAIITVLVLAIIFILYFKL. Over 220-221 the chain is Vesicular; it reads TR.

It belongs to the VTI1 family. Forms SNARE complexes with t-SNAREs. As to expression, expressed at low levels in roots, stems, flowers and leaves.

It is found in the vacuole membrane. Its subcellular location is the prevacuolar compartment membrane. The protein resides in the endosome membrane. The protein localises to the early endosome membrane. May function as a v-SNARE responsible for targeting vesicles involved in the secretory pathway. Involved in actin-dependent endosomal trafficking pathways associated with the vacuole within root hairs and root tip epidermal cells. Essential for cell wall organization and polarized root hair growth. Also required for the localization of SYP41 to the trans-Golgi network in root hair cells. This chain is Vesicle transport v-SNARE 13, found in Arabidopsis thaliana (Mouse-ear cress).